The following is a 1462-amino-acid chain: FYVE, RhoGEF and PH domain-containing protein 5 (1462 aa).

Disordered stretches follow at residues 37–323 (GRLP…SAEE), 492–512 (YVPETVPEETGPEAGSSAPGI), 592–613 (SGSFSQRNHLPSSGTSTPSSMV), 670–718 (HVDV…ASES), 746–777 (EDRSRPPFLPLPLTKPRSISFPSADTSDYENI), and 851–887 (CPISSAAPKEDLTSDEEQRSSEEEDSASRDPSVTHKV). The segment covering 72–82 (PLREDEPKDEG) has biased composition (basic and acidic residues). 2 stretches are compositionally biased toward acidic residues: residues 95 to 106 (SAEEEEEREEGG) and 137 to 151 (EGTDLALEDEGEGCA). Basic and acidic residues predominate over residues 161-177 (SRSEEEEKLVQPHRECS). Acidic residues-rich tracts occupy residues 211–220 (GEAEEDDEEG) and 242–255 (MGQDAEDTSEEPPE). Positions 592-611 (SGSFSQRNHLPSSGTSTPSS) are enriched in polar residues. Residues 676 to 685 (SSSRSSSESS) are compositionally biased toward low complexity. Residues 858–887 (PKEDLTSDEEQRSSEEEDSASRDPSVTHKV) show a composition bias toward basic and acidic residues. Residues 892–1084 (RALVIAQELL…SKVTDRANDS (193 aa)) form the DH domain. The PH 1 domain maps to 1113–1207 (EFLKEGTLMK…WYGCLSRALP (95 aa)). The segment at 1242–1301 (VTHVMMCMNCGCDFSLTLRRHHCHACGKIVCRNCSRNKYPLKYLKDRMAKVCDGCFGELK) adopts an FYVE-type zinc-finger fold. Residues cysteine 1248, cysteine 1251, cysteine 1264, cysteine 1267, cysteine 1272, cysteine 1275, cysteine 1293, and cysteine 1296 each contribute to the Zn(2+) site. The region spanning 1363–1461 (GSAISGYLSR…WIEAMEDASV (99 aa)) is the PH 2 domain.

Expressed in endothelial cells (at protein level).

The protein localises to the cytoplasm. Its subcellular location is the cytoskeleton. It localises to the cell projection. It is found in the ruffle membrane. The protein resides in the endoplasmic reticulum. The protein localises to the golgi apparatus. Its subcellular location is the early endosome. In terms of biological role, activates CDC42, a member of the Ras-like family of Rho- and Rac proteins, by exchanging bound GDP for free GTP. Mediates VEGF-induced CDC42 activation. May regulate proangiogenic action of VEGF in vascular endothelial cells, including network formation, directional movement and proliferation. May play a role in regulating the actin cytoskeleton and cell shape. This is FYVE, RhoGEF and PH domain-containing protein 5 (FGD5) from Homo sapiens (Human).